The primary structure comprises 171 residues: S-ribosylhomocysteine lyase (171 aa).

H54, H58, and C128 together coordinate Fe cation.

Belongs to the LuxS family. Homodimer. It depends on Fe cation as a cofactor.

It carries out the reaction S-(5-deoxy-D-ribos-5-yl)-L-homocysteine = (S)-4,5-dihydroxypentane-2,3-dione + L-homocysteine. Involved in the synthesis of autoinducer 2 (AI-2) which is secreted by bacteria and is used to communicate both the cell density and the metabolic potential of the environment. The regulation of gene expression in response to changes in cell density is called quorum sensing. Catalyzes the transformation of S-ribosylhomocysteine (RHC) to homocysteine (HC) and 4,5-dihydroxy-2,3-pentadione (DPD). The sequence is that of S-ribosylhomocysteine lyase from Enterobacter sp. (strain 638).